Here is a 381-residue protein sequence, read N- to C-terminus: MVLRGVRVVELAGLAPGPFCGMVLADFGAEVVRVNRLGSTGENFLARGKRSLALDLKRSQGVTVLRRMCARADVLLEPFRCGVMEKLQLGPETLLQDNPKLIYARLSGFGQSGIFSKVAGHDINYLALSGVLSKIGRSGENPYPPLNLLADFGGGGLMCTLGIVLALFERTRSGRGQVIDSSMVEGTAYLSSFLWKTQPMGLWKQPRGQNILDGGAPFYTTYKTADGEFMAVGAIEPQFYALLLKGLGLESEELPSQMSSADWPEMKKKFADVFAKKTKAEWCQIFDGTDACVTPVLTFEEALHHQHNRERASFITDGEQLPSPRPAPLLSRTPAVPSAKRDPSVGEHTVEVLREYGFSQEEILQLHSDRIVESDKLKANL.

Substrate-binding positions include R36 and 54–57 (LDLK). Position 57 is an N6-acetyllysine (K57). An N6-acetyllysine; alternate mark is found at K86 and K100. 2 positions are modified to N6-succinyllysine; alternate: K86 and K100. The residue at position 117 (K117) is an N6-acetyllysine. 120–125 (GHDINY) contacts substrate. The Proton acceptor role is filled by H121. The active-site Proton donor is the D151. K267 bears the N6-succinyllysine mark. The tract at residues 316–344 (TDGEQLPSPRPAPLLSRTPAVPSAKRDPS) is disordered. The Microbody targeting signal signature appears at 379 to 381 (ANL).

The protein belongs to the CoA-transferase III family. In terms of assembly, monomer.

The protein resides in the peroxisome. Its subcellular location is the mitochondrion. The enzyme catalyses a (2S)-2-methylacyl-CoA = a (2R)-2-methylacyl-CoA. It carries out the reaction (25R)-3alpha,7alpha,12alpha-trihydroxy-5beta-cholestan-26-oyl-CoA = (25S)-3alpha,7alpha,12alpha-trihydroxy-5beta-cholestan-26-oyl-CoA. It catalyses the reaction (2R,6)-dimethylheptanoyl-CoA = (2S,6)-dimethylheptanoyl-CoA. It participates in lipid metabolism; bile acid biosynthesis. It functions in the pathway lipid metabolism; fatty acid metabolism. Functionally, catalyzes the interconversion of (R)- and (S)-stereoisomers of alpha-methyl-branched-chain fatty acyl-CoA esters. Acts only on coenzyme A thioesters, not on free fatty acids, and accepts as substrates a wide range of alpha-methylacyl-CoAs, including pristanoyl-CoA, trihydroxycoprostanoyl-CoA (an intermediate in bile acid synthesis), and arylpropionic acids like the anti-inflammatory drug ibuprofen (2-(4-isobutylphenyl)propionic acid) but neither 3-methyl-branched nor linear-chain acyl-CoAs. This Mus musculus (Mouse) protein is Alpha-methylacyl-CoA racemase (Amacr).